The primary structure comprises 545 residues: Thermosome subunit alpha (545 aa).

The protein belongs to the TCP-1 chaperonin family. As to quaternary structure, forms a Heterooligomeric complex of two stacked eight-membered rings.

Molecular chaperone; binds unfolded polypeptides in vitro, and has a weak ATPase activity. This chain is Thermosome subunit alpha (thsA), found in Archaeoglobus fulgidus (strain ATCC 49558 / DSM 4304 / JCM 9628 / NBRC 100126 / VC-16).